A 309-amino-acid chain; its full sequence is Porphobilinogen deaminase (309 aa).

Cys241 is subject to S-(dipyrrolylmethanemethyl)cysteine.

This sequence belongs to the HMBS family. Monomer. Requires dipyrromethane as cofactor.

The catalysed reaction is 4 porphobilinogen + H2O = hydroxymethylbilane + 4 NH4(+). Its pathway is porphyrin-containing compound metabolism; protoporphyrin-IX biosynthesis; coproporphyrinogen-III from 5-aminolevulinate: step 2/4. In terms of biological role, tetrapolymerization of the monopyrrole PBG into the hydroxymethylbilane pre-uroporphyrinogen in several discrete steps. This Bacillus cereus (strain G9842) protein is Porphobilinogen deaminase.